The primary structure comprises 304 residues: RNA polymerase II holoenzyme cyclin-like subunit (304 aa).

The Cyclin N-terminal domain occupies 43-174 (TIHDSKANKQ…LIEELQSYLI (132 aa)).

It belongs to the cyclin family. Cyclin C subfamily. As to quaternary structure, component of the SRB8-11 complex, a regulatory module of the Mediator complex.

It localises to the nucleus. Component of the SRB8-11 complex. The SRB8-11 complex is a regulatory module of the Mediator complex which is itself involved in regulation of basal and activated RNA polymerase II-dependent transcription. The SRB8-11 complex may be involved in the transcriptional repression of a subset of genes regulated by Mediator. It may inhibit the association of the Mediator complex with RNA polymerase II to form the holoenzyme complex. The SRB8-11 complex phosphorylates the C-terminal domain (CTD) of the largest subunit of RNA polymerase II. The chain is RNA polymerase II holoenzyme cyclin-like subunit (SSN8) from Kluyveromyces lactis (strain ATCC 8585 / CBS 2359 / DSM 70799 / NBRC 1267 / NRRL Y-1140 / WM37) (Yeast).